The chain runs to 152 residues: Transcriptional regulator MraZ (152 aa).

SpoVT-AbrB domains lie at 5–52 and 81–124; these read ATLV…TLPE and ASEC…DETT.

It belongs to the MraZ family. In terms of assembly, forms oligomers.

Its subcellular location is the cytoplasm. It is found in the nucleoid. Its function is as follows. Negatively regulates its own expression and that of the subsequent genes in the proximal part of the division and cell wall (dcw) gene cluster. Acts by binding directly to DNA. May also regulate the expression of genes outside the dcw cluster. The polypeptide is Transcriptional regulator MraZ (Enterobacter sp. (strain 638)).